We begin with the raw amino-acid sequence, 161 residues long: Small heat shock protein hspJ (161 aa).

A sHSP domain is found at 52–161 (SKFTSLNPKL…FEKEIKINIE (110 aa)).

Belongs to the small heat shock protein (HSP20) family.

The protein is Small heat shock protein hspJ (hspJ) of Dictyostelium discoideum (Social amoeba).